The chain runs to 1308 residues: MGDPAPARSLDDIDLSALRDPAGIFELVEVVGNGTYGQVYKGRHVKTGQLAAIKVMDVTEDEEEEIKQEINMLKKYSHHRNIATYYGAFIKKSPPGNDDQLWLVMEFCGAGSVTDLVKNTKGNALKEDCIAYICREILRGLAHLHAHKVIHRDIKGQNVLLTENAEVKLVDFGVSAQLDRTVGRRNTFIGTPYWMAPEVIACDENPDATYDYRSDIWSLGITAIEMAEGAPPLCDMHPMRALFLIPRNPPPRLKSKKWSKKFTDFIDTCLIKTYLSRPPTEQLLKFPFIRDQPTERQVRIQLKDHIDRSRKKRGEKEETEYEYSGSEEEDDSHGEEGEPSSIMNVPGESTLRREFLRLQQENKSNSEALKQQQQLQQQQQRDPEAHIKHLLHQRQRRIEEQKEERRRVEEQQRREREQRKLQEKEQQRRLEDMQALRREEERRQAEREQEYKRKQLEEQRQSERLQRQLQQEHAYLKSLQQQQQQQQLQKQQQQQQQILPGDRKPLYHYGRGINPADKPAWAREVEERARMNKQQNSPLAKAKPSSAGPEPPISQASPSPPGPLSQTPPMQRPVEPQEGPHKSLVAHRVPLKPYAAPVPRSQSLQDQPTRNLAAFPASHDPDPAAVPTPTATPSARGAVIRQNSDPTSEGPGPSPNPPSWVRPDNEAPPKVPQRTSSIATALNTSGAGGSRPAQAVRASNPDLRRSDPGWERSDSVLPASHGHLPQAGSLERNRNRVGASTKLDSSPVLSPGNKAKPEDHRSRPGRPASYKRAIGEDFVLLKERTLDEAPKPPKKAMDYSSSSEEVESSEEEEEEGDGEPSEGSRDTPGGRSDGDTDSVSTMVVHDVEEISGTQPSYGGGTMVVQRTPEEERSLLLADSNGYTNLPDVVQPSHSPTENSKGQSPPTKDGGSDYQSRGLVKAPGKSSFTMFVDLGIYQPGGSGDTIPITALVGGEGGRLDQLQFDVRKGSVVNVNPTNTRAHSETPEIRKYKKRFNSEILCAALWGVNLLVGTENGLMLLDRSGQGKVYGLIGRRRFQQMDVLEGLNLLITISGKRNKLRVYYLSWLRNKILHNDPEVEKKQGWTTVGDMEGCGHYRVVKYERIKFLVIALKNSVEVYAWAPKPYHKFMAFKSFADLPHRPLLVDLTVEEGQRLKVIYGSSAGFHAVDVDSGNSYDIYIPVHIQSQITPHAIIFLPNTDGMEMLLCYEDEGVYVNTYGRIIKDVVLQWGEMPTSVAYICSNQIMGWGEKAIEIRSVETGHLDGVFMHKRAQRLKFLCERNDKVFFASVRSGGSSQVYFMTLNRNCIMNW.

One can recognise a Protein kinase domain in the interval 25 to 289 (FELVEVVGNG…TEQLLKFPFI (265 aa)). ATP contacts are provided by residues 31-39 (VGNGTYGQV) and Lys54. Catalysis depends on Asp153, which acts as the Proton acceptor. Disordered stretches follow at residues 299 to 347 (RIQL…NVPG), 363 to 383 (KSNS…QRDP), and 395 to 862 (QRRI…GGTM). Residues 317–333 (EETEYEYSGSEEEDDSH) show a composition bias toward acidic residues. Phosphoserine is present on residues Ser324 and Ser326. Over residues 371–380 (QQQQLQQQQQ) the composition is skewed to low complexity. The span at 396–466 (RRIEEQKEER…EEQRQSERLQ (71 aa)) shows a compositional bias: basic and acidic residues. The segment covering 479 to 497 (LQQQQQQQQLQKQQQQQQQ) has biased composition (low complexity). Residues Arg503 and Arg511 each carry the omega-N-methylarginine modification. The segment covering 520–530 (AWAREVEERAR) has biased composition (basic and acidic residues). Residues 600 to 610 (RSQSLQDQPTR) are compositionally biased toward polar residues. The segment covering 623 to 633 (PAAVPTPTATP) has biased composition (low complexity). At Ser644 the chain carries Phosphoserine. Positions 673–685 (QRTSSIATALNTS) are enriched in polar residues. Residues Asp702, Ser720, Ser729, Ser745, Ser746, and Ser750 each carry the phosphoserine modification. Basic and acidic residues predominate over residues 702 to 714 (DLRRSDPGWERSD). A compositionally biased stretch (basic and acidic residues) spans 773 to 797 (AIGEDFVLLKERTLDEAPKPPKKAM). Residues 804 to 820 (EEVESSEEEEEEGDGEP) show a composition bias toward acidic residues. The interval 842-1308 (MVVHDVEEIS…TLNRNCIMNW (467 aa)) is mediates interaction with RAP2A. A Phosphothreonine modification is found at Thr867. Positions 881 to 918 (GYTNLPDVVQPSHSPTENSKGQSPPTKDGGSDYQSRGL) are disordered. The span at 891 to 905 (PSHSPTENSKGQSPP) shows a compositional bias: polar residues. The CNH domain occupies 995-1282 (NSEILCAALW…KFLCERNDKV (288 aa)).

The protein belongs to the protein kinase superfamily. STE Ser/Thr protein kinase family. STE20 subfamily. In terms of assembly, interacts with RAP2A and TANC1. Interacts with NCK1. The cofactor is Mg(2+). Post-translationally, autophosphorylated. As to expression, appears to be ubiquitous, expressed in all tissue types examined. Highly expressed in the brain, moderately expressed in kidney and spleen, low levels present in heart and skeletal muscle. Isoform 2 is more abundant in the brain than isoform 1.

Its subcellular location is the cytoplasm. The protein resides in the postsynaptic density. It is found in the cell projection. The protein localises to the axon. It localises to the dendrite. The catalysed reaction is L-seryl-[protein] + ATP = O-phospho-L-seryl-[protein] + ADP + H(+). It carries out the reaction L-threonyl-[protein] + ATP = O-phospho-L-threonyl-[protein] + ADP + H(+). Its function is as follows. Serine/threonine kinase which acts as a negative regulator of Ras-related Rap2-mediated signal transduction to control neuronal structure and AMPA receptor trafficking. Required for normal synaptic density, dendrite complexity, as well as surface AMPA receptor expression in hippocampal neurons. Can activate the JNK and MAPK14/p38 pathways and mediates stimulation of the stress-activated protein kinase MAPK14/p38 MAPK downstream of the Raf/ERK pathway. Phosphorylates TANC1 upon stimulation by RAP2A, MBP and SMAD1. Has an essential function in negative selection of thymocytes, perhaps by coupling NCK1 to activation of JNK1. Activator of the Hippo signaling pathway which plays a pivotal role in organ size control and tumor suppression by restricting proliferation and promoting apoptosis. MAP4Ks act in parallel to and are partially redundant with STK3/MST2 and STK4/MST2 in the phosphorylation and activation of LATS1/2, and establish MAP4Ks as components of the expanded Hippo pathway. This is Misshapen-like kinase 1 from Mus musculus (Mouse).